A 242-amino-acid chain; its full sequence is Ubiquinone biosynthesis O-methyltransferase (242 aa).

S-adenosyl-L-methionine-binding residues include Arg-44, Gly-64, Asp-85, and Met-129.

This sequence belongs to the methyltransferase superfamily. UbiG/COQ3 family.

It carries out the reaction a 3-demethylubiquinol + S-adenosyl-L-methionine = a ubiquinol + S-adenosyl-L-homocysteine + H(+). The enzyme catalyses a 3-(all-trans-polyprenyl)benzene-1,2-diol + S-adenosyl-L-methionine = a 2-methoxy-6-(all-trans-polyprenyl)phenol + S-adenosyl-L-homocysteine + H(+). The protein operates within cofactor biosynthesis; ubiquinone biosynthesis. In terms of biological role, O-methyltransferase that catalyzes the 2 O-methylation steps in the ubiquinone biosynthetic pathway. This Salmonella agona (strain SL483) protein is Ubiquinone biosynthesis O-methyltransferase.